A 152-amino-acid polypeptide reads, in one-letter code: CASP-like protein 5B3 (152 aa).

At 1 to 21 the chain is on the cytoplasmic side; the sequence is MIDIPGTPGTLTGLVLRISQC. 2 helical membrane-spanning segments follow: residues 22 to 42 and 43 to 63; these read VFAA…SFTA and FCYL…LAIL. Residues 64–77 lie on the Extracellular side of the membrane; the sequence is DTFALVRKKTLLSP. A helical transmembrane segment spans residues 78–98; it reads VLVSLFVVGDWVTSTLSLAGA. Over 99 to 127 the chain is Cytoplasmic; that stretch reads SSSAGITVLYFGDLGSCSFEAECWKYQLS. A helical transmembrane segment spans residues 128 to 148; sequence VALAFLCWITIAVSSLTTLWL. Topologically, residues 149 to 152 are extracellular; the sequence is LASA.

Belongs to the Casparian strip membrane proteins (CASP) family. Homodimer and heterodimers. As to expression, expressed in the stele of the root and in leaves.

Its subcellular location is the cell membrane. The polypeptide is CASP-like protein 5B3 (Arabidopsis thaliana (Mouse-ear cress)).